The chain runs to 895 residues: Catenin alpha-3 (895 aa).

Residues 74-107 (EMIAKEATVLKEELAAALQEVRKESKALKVSAER) are a coiled coil. Serine 160 carries the phosphoserine modification. The stretch at 325 to 379 (RERIIAECNAIRQALQDLLTEYMSNTGKTERSNTLNTAIVNMSKKTRDLRRQLRK) forms a coiled coil. Position 361 is a phosphothreonine (threonine 361). Residues 635-660 (DVSDLEDDHEVRSHTSIQTEGKTDRA) are disordered. Phosphoserine is present on residues serine 637 and serine 647. Threonine 649 carries the phosphothreonine modification.

This sequence belongs to the vinculin/alpha-catenin family. As to quaternary structure, interacts with CTNNB1. Interacts with PKP2. In terms of tissue distribution, expressed in heart (at protein level).

It is found in the cytoplasm. Its subcellular location is the cytoskeleton. The protein resides in the cell junction. It localises to the desmosome. May be involved in formation of stretch-resistant cell-cell adhesion complexes. This chain is Catenin alpha-3, found in Mus musculus (Mouse).